A 338-amino-acid chain; its full sequence is Mycothiol acetyltransferase (338 aa).

N-acetyltransferase domains are found at residues 29 to 173 (PETY…HQLP) and 181 to 338 (ISLR…NKFQ). D55 provides a ligand contact to 1D-myo-inositol 2-(L-cysteinylamino)-2-deoxy-alpha-D-glucopyranoside. An acetyl-CoA-binding site is contributed by 105–107 (LVV). Positions 208, 248, and 261 each coordinate 1D-myo-inositol 2-(L-cysteinylamino)-2-deoxy-alpha-D-glucopyranoside. Acetyl-CoA-binding positions include 265–267 (VGI) and 272–278 (QGKGLGK). Residue Y299 coordinates 1D-myo-inositol 2-(L-cysteinylamino)-2-deoxy-alpha-D-glucopyranoside.

The protein belongs to the acetyltransferase family. MshD subfamily. As to quaternary structure, monomer.

The enzyme catalyses 1D-myo-inositol 2-(L-cysteinylamino)-2-deoxy-alpha-D-glucopyranoside + acetyl-CoA = mycothiol + CoA + H(+). Functionally, catalyzes the transfer of acetyl from acetyl-CoA to desacetylmycothiol (Cys-GlcN-Ins) to form mycothiol. The polypeptide is Mycothiol acetyltransferase (Renibacterium salmoninarum (strain ATCC 33209 / DSM 20767 / JCM 11484 / NBRC 15589 / NCIMB 2235)).